We begin with the raw amino-acid sequence, 696 residues long: DNA ligase (696 aa).

Residues 36 to 40, 85 to 86, and Glu-124 each bind NAD(+); these read DAVYD and SL. Residue Lys-126 is the N6-AMP-lysine intermediate of the active site. Positions 147, 184, 308, and 332 each coordinate NAD(+). Zn(2+)-binding residues include Cys-426, Cys-429, Cys-444, and Cys-449. One can recognise a BRCT domain in the interval 618–696; it reads QRTVSLQGQT…EEELLKLLAS (79 aa).

It belongs to the NAD-dependent DNA ligase family. LigA subfamily. The cofactor is Mg(2+). Requires Mn(2+) as cofactor.

It carries out the reaction NAD(+) + (deoxyribonucleotide)n-3'-hydroxyl + 5'-phospho-(deoxyribonucleotide)m = (deoxyribonucleotide)n+m + AMP + beta-nicotinamide D-nucleotide.. DNA ligase that catalyzes the formation of phosphodiester linkages between 5'-phosphoryl and 3'-hydroxyl groups in double-stranded DNA using NAD as a coenzyme and as the energy source for the reaction. It is essential for DNA replication and repair of damaged DNA. This chain is DNA ligase, found in Prochlorococcus marinus (strain MIT 9303).